Here is a 277-residue protein sequence, read N- to C-terminus: Bifunctional protein FolD (277 aa).

Residues 164 to 166, Ser189, and Thr230 contribute to the NADP(+) site; that span reads GRS.

This sequence belongs to the tetrahydrofolate dehydrogenase/cyclohydrolase family. In terms of assembly, homodimer.

The enzyme catalyses (6R)-5,10-methylene-5,6,7,8-tetrahydrofolate + NADP(+) = (6R)-5,10-methenyltetrahydrofolate + NADPH. It carries out the reaction (6R)-5,10-methenyltetrahydrofolate + H2O = (6R)-10-formyltetrahydrofolate + H(+). It functions in the pathway one-carbon metabolism; tetrahydrofolate interconversion. In terms of biological role, catalyzes the oxidation of 5,10-methylenetetrahydrofolate to 5,10-methenyltetrahydrofolate and then the hydrolysis of 5,10-methenyltetrahydrofolate to 10-formyltetrahydrofolate. In Clostridium perfringens (strain 13 / Type A), this protein is Bifunctional protein FolD.